The primary structure comprises 454 residues: Bifunctional protein GlmU (454 aa).

The segment at 1 to 228 (MNKCAIILAA…FEETLGVNSR (228 aa)) is pyrophosphorylase. UDP-N-acetyl-alpha-D-glucosamine is bound by residues 8–11 (LAAG), lysine 22, glutamine 73, and 78–79 (GT). Residue aspartate 103 coordinates Mg(2+). The UDP-N-acetyl-alpha-D-glucosamine site is built by glycine 140, glutamate 154, asparagine 169, and asparagine 226. Residue asparagine 226 coordinates Mg(2+). Residues 229–249 (AELAKVESIMRNRINRTHLDN) form a linker region. Residues 250 to 454 (GVTIIDPLNT…EGWVERKKLK (205 aa)) are N-acetyltransferase. 2 residues coordinate UDP-N-acetyl-alpha-D-glucosamine: arginine 331 and lysine 349. The active-site Proton acceptor is the histidine 361. UDP-N-acetyl-alpha-D-glucosamine is bound by residues tyrosine 364 and asparagine 375. Acetyl-CoA-binding positions include 384–385 (NY), alanine 421, and arginine 438.

In the N-terminal section; belongs to the N-acetylglucosamine-1-phosphate uridyltransferase family. This sequence in the C-terminal section; belongs to the transferase hexapeptide repeat family. Homotrimer. Mg(2+) serves as cofactor.

It localises to the cytoplasm. The catalysed reaction is alpha-D-glucosamine 1-phosphate + acetyl-CoA = N-acetyl-alpha-D-glucosamine 1-phosphate + CoA + H(+). It carries out the reaction N-acetyl-alpha-D-glucosamine 1-phosphate + UTP + H(+) = UDP-N-acetyl-alpha-D-glucosamine + diphosphate. Its pathway is nucleotide-sugar biosynthesis; UDP-N-acetyl-alpha-D-glucosamine biosynthesis; N-acetyl-alpha-D-glucosamine 1-phosphate from alpha-D-glucosamine 6-phosphate (route II): step 2/2. It functions in the pathway nucleotide-sugar biosynthesis; UDP-N-acetyl-alpha-D-glucosamine biosynthesis; UDP-N-acetyl-alpha-D-glucosamine from N-acetyl-alpha-D-glucosamine 1-phosphate: step 1/1. The protein operates within bacterial outer membrane biogenesis; LPS lipid A biosynthesis. In terms of biological role, catalyzes the last two sequential reactions in the de novo biosynthetic pathway for UDP-N-acetylglucosamine (UDP-GlcNAc). The C-terminal domain catalyzes the transfer of acetyl group from acetyl coenzyme A to glucosamine-1-phosphate (GlcN-1-P) to produce N-acetylglucosamine-1-phosphate (GlcNAc-1-P), which is converted into UDP-GlcNAc by the transfer of uridine 5-monophosphate (from uridine 5-triphosphate), a reaction catalyzed by the N-terminal domain. The sequence is that of Bifunctional protein GlmU from Clostridium perfringens (strain ATCC 13124 / DSM 756 / JCM 1290 / NCIMB 6125 / NCTC 8237 / Type A).